The following is a 359-amino-acid chain: Protein mab-21-like 2 (359 aa).

This sequence belongs to the mab-21 family.

Its subcellular location is the nucleus. The protein localises to the cytoplasm. Required for eye morphogenesis. May promote the survival of proliferating retinal progenitor cells. This Danio rerio (Zebrafish) protein is Protein mab-21-like 2 (mab21l2).